Consider the following 1081-residue polypeptide: Importin-4 (1081 aa).

Met1 carries the N-acetylmethionine modification. The 67-residue stretch at 24-90 folds into the Importin N-terminal domain; sequence ATEQLQIVLR…KSLILTALQR (67 aa). 6 HEAT repeats span residues 348 to 385, 390 to 427, 431 to 471, 475 to 513, 895 to 932, and 936 to 974; these read KLCP…GAGD, RLLP…NLQP, SYSR…NLGP, PYLP…AAQA, QFVS…HGGH, and EHFP…ASPT.

Belongs to the importin beta family. In terms of assembly, found in a cytosolic complex with ASF1 (ASF1A or ASF1B) and histones H3 and H4.

It is found in the cytoplasm. It localises to the nucleus. Functionally, nuclear transport receptor that mediates nuclear import of proteins, such as histones, RPS3A, TNP2 and VDR. Serves as receptor for nuclear localization signals (NLS) in cargo substrates. Is thought to mediate docking of the importin/substrate complex to the nuclear pore complex (NPC) through binding to nucleoporin and the complex is subsequently translocated through the pore by an energy requiring, Ran-dependent mechanism. At the nucleoplasmic side of the NPC, Ran binds to the importin, the importin/substrate complex dissociates and importin is re-exported from the nucleus to the cytoplasm where GTP hydrolysis releases Ran. The directionality of nuclear import is thought to be conferred by an asymmetric distribution of the GTP- and GDP-bound forms of Ran between the cytoplasm and nucleus. Mediates the nuclear import of the histone H3-H4 dimer when in complex with ASF1 (ASF1A or ASF1B). Mediates the ligand-independent nuclear import of vitamin D receptor (VDR). In vitro, mediates the nuclear import of human cytomegalovirus UL84 by recognizing a non-classical NLS. The sequence is that of Importin-4 (IPO4) from Homo sapiens (Human).